The chain runs to 308 residues: MGEGGAQRPLLTVIAGPTASGKTALAIALAQRAGGEIVSADSQQVYRHFDIGTAKPSSEELAAVPHHLVSAVDPMEAFSAVEYQRRADAVIAEIAARGRPVFVVGGTGLYLRVLLHGVLEAPGALPELRAELEALAAGEGREAVHRRLAEVDPETAAKLPPQDLVRVIRALEIHAQTGVPASAFRKAHAFAPDRYPFQLYVLSPPRDVLYGLINTRTRMLFERGLVEETRELLARGYADSAPMRSVGYVQARAVVEGRMTREEAIHDTAQETRRYAKRQLTWFRKEPGAVFLAPPYEAALPLGGCCSP.

16-23 (GPTASGKT) serves as a coordination point for ATP. 18 to 23 (TASGKT) contacts substrate. The tract at residues 41 to 44 (DSQQ) is interaction with substrate tRNA.

This sequence belongs to the IPP transferase family. In terms of assembly, monomer. The cofactor is Mg(2+).

It catalyses the reaction adenosine(37) in tRNA + dimethylallyl diphosphate = N(6)-dimethylallyladenosine(37) in tRNA + diphosphate. Functionally, catalyzes the transfer of a dimethylallyl group onto the adenine at position 37 in tRNAs that read codons beginning with uridine, leading to the formation of N6-(dimethylallyl)adenosine (i(6)A). The sequence is that of tRNA dimethylallyltransferase from Myxococcus xanthus (strain DK1622).